Reading from the N-terminus, the 284-residue chain is Homeobox protein Hox-D13 (284 aa).

A DNA-binding region (homeobox) is located at residues 217–276 (GRKKRVPYTKTQLKELEREYATNKFITKEKRRRISTATNLTERQVTIWFQNRRVKEKKVV).

Belongs to the Abd-B homeobox family.

The protein resides in the nucleus. Sequence-specific transcription factor that binds gene promoters and activates their transcription. Part of a developmental regulatory system that provides cells with specific positional identities on the anterior-posterior axis. This chain is Homeobox protein Hox-D13 (HOXD13), found in Heterodontus francisci (Horn shark).